Here is a 106-residue protein sequence, read N- to C-terminus: uncharacterized protein (106 aa).

This is an uncharacterized protein from Escherichia coli O157:H7.